Here is a 133-residue protein sequence, read N- to C-terminus: Cytochrome c-554 (133 aa).

Gln-1 is modified (pyrrolidone carboxylic acid). Residues Met-17, Cys-122, Cys-125, and His-126 each contribute to the heme c site.

In terms of processing, binds 1 heme c group covalently per subunit.

It is found in the periplasm. Functionally, monoheme c-type cytochrome, that is particularly expressed when cells generate energy via aerobic respiration. This Cereibacter sphaeroides (Rhodobacter sphaeroides) protein is Cytochrome c-554 (cycF).